Reading from the N-terminus, the 516-residue chain is Probable serine/threonine-protein kinase WNK3 (516 aa).

The Protein kinase domain maps to 22–280 (GRYKEVLGKG…AKELLDDPFL (259 aa)). Residues 102-105 (TEVF) and lysine 152 each bind ATP. The active-site Proton acceptor is the aspartate 169. The segment at 426–451 (SSPKAGAGDSRSPFAPRSNSKLSSAQ) is disordered. Over residues 442–451 (RSNSKLSSAQ) the composition is skewed to polar residues. Residues 457-490 (EVGVIVEKLESLLRKQREEIEEMQRDQERIVTEF) adopt a coiled-coil conformation.

This sequence belongs to the protein kinase superfamily. Ser/Thr protein kinase family. WNK subfamily.

The enzyme catalyses L-seryl-[protein] + ATP = O-phospho-L-seryl-[protein] + ADP + H(+). It catalyses the reaction L-threonyl-[protein] + ATP = O-phospho-L-threonyl-[protein] + ADP + H(+). Functionally, may regulate flowering time by modulating the photoperiod pathway. The chain is Probable serine/threonine-protein kinase WNK3 (WNK3) from Arabidopsis thaliana (Mouse-ear cress).